Consider the following 184-residue polypeptide: Elongation factor P (184 aa).

This sequence belongs to the elongation factor P family.

It localises to the cytoplasm. It participates in protein biosynthesis; polypeptide chain elongation. Involved in peptide bond synthesis. Stimulates efficient translation and peptide-bond synthesis on native or reconstituted 70S ribosomes in vitro. Probably functions indirectly by altering the affinity of the ribosome for aminoacyl-tRNA, thus increasing their reactivity as acceptors for peptidyl transferase. This chain is Elongation factor P, found in Thermus thermophilus (strain ATCC BAA-163 / DSM 7039 / HB27).